A 372-amino-acid polypeptide reads, in one-letter code: Innexin-16 (372 aa).

Transmembrane regions (helical) follow at residues V31–G51, V106–I126, L181–F201, and I263–V283. An N-linked (GlcNAc...) asparagine glycan is attached at N352.

Belongs to the pannexin family.

The protein resides in the cell membrane. It is found in the cell junction. The protein localises to the gap junction. Structural component of the gap junctions. Required for signals downstream of defecation clock. The polypeptide is Innexin-16 (inx-16) (Caenorhabditis elegans).